The sequence spans 951 residues: Valine--tRNA ligase (951 aa).

A 'HIGH' region motif is present at residues 42–52; it reads PNVTGSLHMGH. A 'KMSKS' region motif is present at residues 554–558; it reads KMSKS. Lys557 provides a ligand contact to ATP. The stretch at 880 to 914 forms a coiled coil; sequence AGLIDKAAELDRLAKEVAKLEAEIGRIESKLSNEG.

It belongs to the class-I aminoacyl-tRNA synthetase family. ValS type 1 subfamily. Monomer.

The protein localises to the cytoplasm. It carries out the reaction tRNA(Val) + L-valine + ATP = L-valyl-tRNA(Val) + AMP + diphosphate. Its function is as follows. Catalyzes the attachment of valine to tRNA(Val). As ValRS can inadvertently accommodate and process structurally similar amino acids such as threonine, to avoid such errors, it has a 'posttransfer' editing activity that hydrolyzes mischarged Thr-tRNA(Val) in a tRNA-dependent manner. The polypeptide is Valine--tRNA ligase (Pectobacterium atrosepticum (strain SCRI 1043 / ATCC BAA-672) (Erwinia carotovora subsp. atroseptica)).